The chain runs to 444 residues: Probable D-serine dehydratase (444 aa).

An N6-(pyridoxal phosphate)lysine modification is found at lysine 118.

This sequence belongs to the serine/threonine dehydratase family. DsdA subfamily. Requires pyridoxal 5'-phosphate as cofactor.

It catalyses the reaction D-serine = pyruvate + NH4(+). This Acinetobacter baumannii (strain AB0057) protein is Probable D-serine dehydratase.